The primary structure comprises 263 residues: Protein TILLER ANGLE CONTROL 1 (263 aa).

An IGT motif motif is present at residues 55–61; it reads GILAIGT. The disordered stretch occupies residues 243–263; sequence GKKIHPEQLNGRSNAEGPLTA.

It belongs to the TAC family. Highly expressed in leaf sheath pulvinus. Expressed in shoot apical meristem and leaves.

Functionally, involved in the regulation of leaf growth angle. Promotes horizontal shoot growth. The polypeptide is Protein TILLER ANGLE CONTROL 1 (Zea mays (Maize)).